A 683-amino-acid chain; its full sequence is Probable metal-nicotianamine transporter YSL3 (683 aa).

14 helical membrane-spanning segments follow: residues 29 to 49 (LVTP…CFVG), 58 to 78 (IVPA…KWLI), 97 to 117 (MFLL…GFAT), 142 to 162 (HVPI…GVLI), 204 to 224 (VATI…QWFY), 265 to 285 (IVNF…YPFL), 309 to 329 (VFIS…TLIT), 372 to 392 (IPIP…TIAI), 404 to 424 (LAVL…ATGL), 448 to 468 (PGAV…LHIS), 490 to 510 (TGQI…FLAF), 553 to 573 (CMTF…VVLV), 595 to 615 (FFAG…LLAW), and 628 to 648 (SAVA…SALL).

The protein belongs to the YSL (TC 2.A.67.2) family.

The protein localises to the membrane. Functionally, may be involved in the transport of nicotianamine-chelated metals. The chain is Probable metal-nicotianamine transporter YSL3 (YSL3) from Oryza sativa subsp. japonica (Rice).